Reading from the N-terminus, the 145-residue chain is Large ribosomal subunit protein eL32 (145 aa).

Belongs to the eukaryotic ribosomal protein eL32 family.

This Aeropyrum pernix (strain ATCC 700893 / DSM 11879 / JCM 9820 / NBRC 100138 / K1) protein is Large ribosomal subunit protein eL32 (rpl32e).